The sequence spans 243 residues: Voltage-gated monoatomic cation channel TMEM109 (243 aa).

Positions 1-33 (MAGSGSSAPWGKHLLHAVLMVLVALVLLHSALA) are cleaved as a signal peptide. The Lumenal portion of the chain corresponds to 34 to 83 (QSHRDFAPPGQQRREAPVDLLTQIGRSVRETLDTWIGPETMHLISETLSQ). A helical transmembrane segment spans residues 84–104 (VMWAISSAISVAFFALSGIAA). Topologically, residues 105–135 (QLLTALGLDGDHLTQGLKLSPSQVQTFLLWG) are cytoplasmic. Residues 136–156 (AGALVVYWLLSLLLGLVLAVL) form a helical membrane-spanning segment. Over 157–185 (GRILGGLKLVIFLAGFVALVRSVPDPSTR) the chain is Lumenal. Residues 186-205 (ALLLLALLTLYALLSRLTGS) form a helical membrane-spanning segment. The Cytoplasmic segment spans residues 206 to 243 (RASGAQLEAKVRGLERQVDELRWRQRRAAKGARSVEEE).

Homooligomer. Interacts with CRYAB; in the cellular response to DNA damage. Post-translationally, the N-terminus is blocked. As to expression, widely expressed. Expressed in skeletal, cardiac and smooth muscle cells, in brain, including neuroglial cells, cerebral cortex neurons and cerebellum, but not Purkinje cells. Also detected in Paneth and Goblet cells of the small intestine (but not in the epithelium), duodenal gland, pancreas, parotid gland, testis, thyroid gland and adrenal gland, as well as in epidermis, choroid plexus, ductus epididymidis, lymphocytes, fibroblasts, endothelial cells and seminiferous epithelial cells (at protein level). Not detected in mucous cells of the duodenal gland, in hepatocytes nor in uriniferous tubules.

The protein localises to the nucleus outer membrane. Its subcellular location is the endoplasmic reticulum membrane. It is found in the sarcoplasmic reticulum membrane. It catalyses the reaction K(+)(in) = K(+)(out). The catalysed reaction is Ca(2+)(in) = Ca(2+)(out). Functionally, functions as a voltage-gated monoatomic cation channel permeable to both potassium and calcium. Plays a role in the cellular response to DNA damage. This is Voltage-gated monoatomic cation channel TMEM109 from Oryctolagus cuniculus (Rabbit).